Reading from the N-terminus, the 321-residue chain is MVTIRSGSIVILVLLAVSFLALVANGEDKTIKVKKVRGNKVCTQGWECSWWSKYCCNQTISDYFQVYQFEQLFSKRNTPIAHAVGFWDYQSFITAAALFEPLGFGTTGGKLMGQKEMAAFLGHVASKTSCGYGVATGGPLAWGLCYNREMSPMQSYCDESWKFKYPCSPGAEYYGRGALPIYWNFNYGAAGEALKADLLNHPEYIEQNATLAFQAAIWRWMTPIKRAQPSAHDIFVGNWKPTKNDTLSKRGPTFGSTMNVLYGEYTCGQGSIDPMNNIISHYLYFLDLMGIGREDAGPNDELSCAEQKPFNPSTVPSSSSS.

Residues 1–26 (MVTIRSGSIVILVLLAVSFLALVANG) form the signal peptide. Cys-42 and Cys-55 are joined by a disulfide. Residue Asn-57 is glycosylated (N-linked (GlcNAc...) asparagine). Cysteines 157 and 167 form a disulfide. 2 N-linked (GlcNAc...) asparagine glycosylation sites follow: Asn-208 and Asn-244. The cysteines at positions 267 and 304 are disulfide-linked. The tract at residues 297–321 (GPNDELSCAEQKPFNPSTVPSSSSS) is disordered. A compositionally biased stretch (polar residues) spans 310-321 (FNPSTVPSSSSS).

The protein belongs to the glycosyl hydrolase 19 family. As to expression, mostly expressed in seedlings shoots and roots, stems, and flowers, and, to a lower extent, in flowers, mature leaves and roots.

The protein localises to the secreted. Functionally, no chitinase activity. Essential for normal plant growth and development. Regulates cell expansion extent and differentiation at least in roots and hypocotyls. Prevents lignin accumulation in the pith. May modulate ethylene-mediated regulation during development. Probably required to establish thermotolerance acclimation. Plays a role for controlled anisotropic cell expansion in the regulation of waving during root gravitropism and thigmotropism. Involved in the root system architecture adaptation to multiple environmental conditions such as nitrate. Contributes to salt tolerance and possibly to drought by preventing the overaccumulation of sodium ions. This chain is Chitinase-like protein 1 (CTL1), found in Arabidopsis thaliana (Mouse-ear cress).